A 72-amino-acid chain; its full sequence is NADH dehydrogenase [ubiquinone] 1 beta subcomplex subunit 3-A (72 aa).

Residues 31–48 form a helical membrane-spanning segment; the sequence is ALPGIGIGVGAFCVYLVG.

Belongs to the complex I NDUFB3 subunit family. As to quaternary structure, complex I is composed of at least 49 different subunits.

It localises to the mitochondrion inner membrane. Its function is as follows. Accessory subunit of the mitochondrial membrane respiratory chain NADH dehydrogenase (Complex I), that is believed not to be involved in catalysis. Complex I functions in the transfer of electrons from NADH to the respiratory chain. The immediate electron acceptor for the enzyme is believed to be ubiquinone. The chain is NADH dehydrogenase [ubiquinone] 1 beta subcomplex subunit 3-A from Arabidopsis thaliana (Mouse-ear cress).